Here is a 1135-residue protein sequence, read N- to C-terminus: MHQMNAKMHFRFVFALLIVSFNHDVLGKNLKYRIYEEQRVGSVIARLSEDVADVLLKLPNPSTVRFRAMQRGNSPLLVVNEDNGEISIGATIDREQLCQKNLNCSIEFDVITLPTEHLQLFHIEVEVLDINDNSPQFSRSLIPIEISESAAVGTRIPLDSAFDPDVGENSLHTYSLSANDFFNIEVRTRTDGAKYAELIVVRELDRELKSSYELQLTASDMGVPQRSGSSILKISISDSNDNSPAFEQQSYIIQLLENSPVGTLLLDLNATDPDEGANGKIVYSFSSHVSPKIMETFKIDSERGHLTLFKQVDYEITKSYEIDVQAQDLGPNSIPAHCKIIIKVVDVNDNKPEININLMSPGKEEISYIFEGDPIDTFVALVRVQDKDSGLNGEIVCKLHGHGHFKLQKTYENNYLILTNATLDREKRSEYSLTVIAEDRGTPSLSTVKHFTVQINDINDNPPHFQRSRYEFVISENNSPGAYITTVTATDPDLGENGQVTYTILESFILGSSITTYVTIDPSNGAIYALRIFDHEEVSQITFVVEARDGGSPKQLVSNTTVVLTIIDENDNVPVVIGPALRNNTAEITIPKGAESGFHVTRIRAIDRDSGVNAELSCAIVAGNEENIFIIDPRSCDIHTNVSMDSVPYTEWELSVIIQDKGNPQLHTKVLLKCMIFEYAESVTSTAMTSVSQASLDVSMIIIISLGAICAVLLVIMVLFATRCNREKKDTRSYNCRVAESTYQHHPKRPSRQIHKGDITLVPTINGTLPIRSHHRSSPSSSPTLERGQMGSRQSHNSHQSLNSLVTISSNHVPENFSLELTHATPAVEQVSQLLSMLHQGQYQPRPSFRGNKYSRSYRYALQDMDKFSLKDSGRGDSEAGDSDYDLGRDSPIDRLLGEGFSDLFLTDGRIPAAMRLCTEECRVLGHSDQCWMPPLPSPSSDYRSNMFIPGEEFPTQPQQQHPHQSLEDDAQPADSGEKKKSFSTFGKDSPNDEDTGDTSTSSLLSEMSSVFQRLLPPSLDTYSECSEVDRSNSLERRKGPLPAKTVGYPQGVAAWAASTHFQNPTTNCGPPLGTHSSVQPSSKWLPAMEEIPENYEEDDFDNVLNHLNDGKHELMDASELVAEINKLLQDVRQS.

The first 27 residues, 1–27 (MHQMNAKMHFRFVFALLIVSFNHDVLG), serve as a signal peptide directing secretion. 6 Cadherin domains span residues 28–137 (KNLK…SPQF), 138–246 (SRSL…SPAF), 247–354 (EQQS…KPEI), 361–465 (PGKE…PPHF), 466–576 (QRSR…VPVV), and 582–688 (RNNT…STAM). The Extracellular portion of the chain corresponds to 28-699 (KNLKYRIYEE…SVSQASLDVS (672 aa)). N-linked (GlcNAc...) asparagine glycosylation is present at asparagine 103. N-linked (GlcNAc...) asparagine glycosylation is found at asparagine 269, asparagine 420, asparagine 559, asparagine 583, and asparagine 641. Residues 700–720 (MIIIISLGAICAVLLVIMVLF) traverse the membrane as a helical segment. Topologically, residues 721 to 1135 (ATRCNREKKD…NKLLQDVRQS (415 aa)) are cytoplasmic. Disordered regions lie at residues 769–800 (LPIRSHHRSSPSSSPTLERGQMGSRQSHNSHQ), 869–889 (SLKDSGRGDSEAGDSDYDLGR), 942–1003 (DYRS…STSS), and 1023–1046 (YSECSEVDRSNSLERRKGPLPAKT). The span at 791 to 800 (GSRQSHNSHQ) shows a compositional bias: polar residues. Over residues 869 to 878 (SLKDSGRGDS) the composition is skewed to basic and acidic residues. An interaction with DAB1 region spans residues 893–1135 (IDRLLGEGFS…NKLLQDVRQS (243 aa)). Basic and acidic residues predominate over residues 1028 to 1039 (EVDRSNSLERRK).

Interacts with DAB1. Expressed in all tissues, with highest expression in lung and ovary.

It localises to the cell membrane. Potential calcium-dependent cell-adhesion protein. The chain is Protocadherin-18 (PCDH18) from Homo sapiens (Human).